A 226-amino-acid chain; its full sequence is SURF1-like protein (226 aa).

The next 2 membrane-spanning stretches (helical) occupy residues 3 to 23 (TNLV…WQLS) and 199 to 219 (LEYA…YVIY).

The protein belongs to the SURF1 family.

The protein localises to the cell membrane. The polypeptide is SURF1-like protein (Rickettsia felis (strain ATCC VR-1525 / URRWXCal2) (Rickettsia azadi)).